The following is a 791-amino-acid chain: Phenylalanine--tRNA ligase beta subunit (791 aa).

Positions 39–149 constitute a tRNA-binding domain; the sequence is GDEIQNVVTG…SDTAIGKDIK (111 aa). The B5 domain occupies 403-478; it reads IKERNLKVDS…RIYGYNNIPT (76 aa). 4 residues coordinate Mg(2+): Asp456, Asp462, Glu465, and Glu466. The FDX-ACB domain maps to 698–791; the sequence is PKFPAVDRDM…LENNLGAELR (94 aa).

It belongs to the phenylalanyl-tRNA synthetase beta subunit family. Type 1 subfamily. In terms of assembly, tetramer of two alpha and two beta subunits. Requires Mg(2+) as cofactor.

It is found in the cytoplasm. It carries out the reaction tRNA(Phe) + L-phenylalanine + ATP = L-phenylalanyl-tRNA(Phe) + AMP + diphosphate + H(+). In Clostridium tetani (strain Massachusetts / E88), this protein is Phenylalanine--tRNA ligase beta subunit.